Consider the following 424-residue polypeptide: Hemagglutinin-esterase (424 aa).

An N-terminal signal peptide occupies residues 1-16 (MFLLPRFVLVSCIIGS). Residues 7-127 (FVLVSCIIGS…SNDIWMQNKG (121 aa)) form an esterase domain 1 region. The Virion surface portion of the chain corresponds to 17-392 (LGFDNPPTNV…PICVYDPLPI (376 aa)). Catalysis depends on S40, which acts as the Nucleophile. The cysteines at positions 44 and 65 are disulfide-linked. 5 N-linked (GlcNAc...) asparagine; by host glycosylation sites follow: N54, N89, N153, N236, and N301. Disulfide bonds link C113-C162, C197-C276, and C205-C249. A receptor binding region spans residues 128–266 (LFYTQVYKNM…GNYLAISNEL (139 aa)). Positions 267–379 (LLTVPTKAIC…RCPTAADINT (113 aa)) are esterase domain 2. A disulfide bond links C307 and C312. An N-linked (GlcNAc...) asparagine; by host glycan is attached at N316. Active-site charge relay system residues include D326 and H329. A disulfide bridge connects residues C347 and C371. N358 carries N-linked (GlcNAc...) asparagine; by host glycosylation. A helical membrane pass occupies residues 393–413 (ILLGILLGVAVIIIVVLLLYF). At 414–424 (MVDNGTRLHDA) the chain is on the intravirion side. N417 carries N-linked (GlcNAc...) asparagine; by host glycosylation.

Belongs to the influenza type C/coronaviruses hemagglutinin-esterase family. Homodimer; disulfide-linked. Forms a complex with the M protein in the pre-Golgi. Associates then with S-M complex to form a ternary complex S-M-HE. N-glycosylated in the host RER.

It is found in the virion membrane. It localises to the host cell membrane. It carries out the reaction N-acetyl-9-O-acetylneuraminate + H2O = N-acetylneuraminate + acetate + H(+). The catalysed reaction is N-acetyl-4-O-acetylneuraminate + H2O = N-acetylneuraminate + acetate + H(+). Structural protein that makes short spikes at the surface of the virus. Contains receptor binding and receptor-destroying activities. Mediates de-O-acetylation of N-acetyl-4-O-acetylneuraminic acid, which is probably the receptor determinant recognized by the virus on the surface of erythrocytes and susceptible cells. This receptor-destroying activity is important for virus release as it probably helps preventing self-aggregation and ensures the efficient spread of the progeny virus from cell to cell. May serve as a secondary viral attachment protein for initiating infection, the spike protein being the major one. May become a target for both the humoral and the cellular branches of the immune system. The sequence is that of Hemagglutinin-esterase from Bovine coronavirus (strain 98TXSF-110-LUN) (BCoV-LUN).